The sequence spans 163 residues: Pheromone-binding protein 1 (163 aa).

A signal peptide spans 1–21 (MLGKISLLLLPVFVAINLVHS). Intrachain disulfides connect C40–C75, C71–C129, and C118–C138.

The protein belongs to the PBP/GOBP family. Antenna.

This major soluble protein in olfactory sensilla of male moths might serve to solubilize the extremely hydrophobic pheromone molecules and to transport pheromone through the aqueous lymph to receptors located on olfactory cilia. The protein is Pheromone-binding protein 1 of Antheraea pernyi (Chinese oak silk moth).